The chain runs to 416 residues: Phakinin (416 aa).

The segment at 1 to 48 (MSKRRVAADLPSGTNSSMPVQRHRVSSLRGTHSPSSLDSPPASRTSAV) is disordered. Ser2 carries the post-translational modification N-acetylserine. Positions 2 to 115 (SKRRVAADLP…HTTVEDLGGC (114 aa)) are head. 4 positions are modified to phosphoserine: Ser27, Ser33, Ser36, and Ser91. The segment covering 28–48 (LRGTHSPSSLDSPPASRTSAV) has biased composition (polar residues). In terms of domain architecture, IF rod spans 105 to 416 (DHTTVEDLGG…HALLDREENN (312 aa)). Coiled coils occupy residues 116–146 (LVEY…SKAK), 170–249 (LENA…VKVL), and 308–402 (QTQE…LQKD). Residues 397 to 416 (SQLQKDVASYHALLDREENN) are tail.

The protein belongs to the intermediate filament family. Part of a complex required for lens intermediate filament formation composed of BFSP1, BFSP2 and CRYAA. Found in a complex composed of PPL (via C-terminal linker domain), BFSP1 and BFSP2 in the retinal lens. Within the complex interacts with PPL (via C-terminal linker domain) and with BFSP1. Identified in a complex that contains VIM, EZR, AHNAK, BFSP1, BFSP2, ANK2, PLEC, PRX and spectrin. Interacts with LGSN. Interacts with VIM. In terms of tissue distribution, detected in retina lens fiber cells (at protein level). Also expressed in the lens epithelium, abundantly expressed in the anterior and anterolateral epithelium, less frequently expressed nearer the lens coronal equator (at protein level).

It localises to the cell membrane. The protein localises to the cytoplasm. It is found in the cytoskeleton. Its subcellular location is the cell cortex. Functionally, required for the correct formation of lens intermediate filaments as part of a complex composed of BFSP1, BFSP2 and CRYAA. Plays a role in maintenance of retinal lens optical clarity. This Mus musculus (Mouse) protein is Phakinin (Bfsp2).